The following is a 440-amino-acid chain: DNA polymerase delta small subunit (440 aa).

It belongs to the DNA polymerase delta/II small subunit family. Heterodimer with subunits of 125 kDa and 50 kDa.

The protein resides in the nucleus. The catalysed reaction is DNA(n) + a 2'-deoxyribonucleoside 5'-triphosphate = DNA(n+1) + diphosphate. Its function is as follows. The function of the small subunit is not yet clear. In Arabidopsis thaliana (Mouse-ear cress), this protein is DNA polymerase delta small subunit (POLD2).